The chain runs to 1701 residues: Rho guanine nucleotide exchange factor TIAM2 (1701 aa).

Disordered regions lie at residues 1 to 21 (MGNS…NTIT), 201 to 250 (SPTL…SSWY), 265 to 293 (GSFL…FNQS), and 389 to 417 (SLSR…DGLN). Glycine 2 is lipidated: N-myristoyl glycine. Low complexity predominate over residues 238–248 (SKGSSLSSESS). Positions 397–413 (LQEPRSKEGSDYFDSRS) are enriched in basic and acidic residues. The PH 1 domain maps to 506-620 (VVRKAGWLFF…WVTAVHSACA (115 aa)). The stretch at 628-695 (GKEDTLRLLK…KFHMDLFRMR (68 aa)) forms a coiled coil. Residues 810-881 (IQTYVHFQDN…YMQQQVYDEI (72 aa)) form the RBD domain. Residues 890 to 976 (DVQLTKTGSV…GLTLIARPPD (87 aa)) form the PDZ domain. The segment at 1070-1092 (DSQANGMEGPRENQDPPPRSLAR) is disordered. The region spanning 1099-1293 (RLRKVIQELV…EKVASHINEM (195 aa)) is the DH domain. The PH 2 domain occupies 1347-1478 (DLELTVFVFK…EKTCKDRLVP (132 aa)). Disordered stretches follow at residues 1500 to 1556 (NSSS…GLAD) and 1568 to 1628 (LSDE…PKLV). Over residues 1513–1527 (GTLLDSDEGSLSSGT) the composition is skewed to low complexity. Position 1583 is a phosphoserine (serine 1583). The segment covering 1596–1607 (RISEDPDVHPEA) has biased composition (basic and acidic residues). Threonine 1648 is subject to Phosphothreonine.

It belongs to the TIAM family. In terms of assembly, interacts with MAP1A, MAP1B, PARP1 and YWHAE. Interacts with CD44, PARD3 and MAPK8IP2. Phosphorylated on serine and threonine residues. Phosphorylated on Thr-1648 by Rho-kinase. Its phosphorylation by Rho-kinase inhibits its guanine nucleotide exchange activity, its interaction with MAP1A, MAP1B, PARP1 and YWHAE and reduces its ability to promote neurite growth. Expressed in the occipital, frontal and temporal lobes, cerebellum, putamen and testis.

The protein localises to the cytoplasm. It localises to the cell projection. The protein resides in the lamellipodium. Its subcellular location is the filopodium. It is found in the growth cone. The protein localises to the neuron projection. It localises to the perikaryon. Its function is as follows. Modulates the activity of RHO-like proteins and connects extracellular signals to cytoskeletal activities. Acts as a GDP-dissociation stimulator protein that stimulates the GDP-GTP exchange activity of RHO-like GTPases and activates them. Mediates extracellular laminin signals to activate Rac1, contributing to neurite growth. Involved in lamellipodial formation and advancement of the growth cone of embryonic hippocampal neurons. Promotes migration of neurons in the cerebral cortex. When overexpressed, induces membrane ruffling accompanied by the accumulation of actin filaments along the altered plasma membrane. Activates specifically RAC1, but not CDC42 and RHOA. The polypeptide is Rho guanine nucleotide exchange factor TIAM2 (TIAM2) (Homo sapiens (Human)).